The primary structure comprises 670 residues: Solute carrier organic anion transporter family member 1A3 (670 aa).

The Cytoplasmic portion of the chain corresponds to 1–20; the sequence is MGDLEKGAATHGAGCFAKIK. A helical transmembrane segment spans residues 21-40; sequence VFLMALTCAYVSKSLSGTFM. Over 41–59 the chain is Extracellular; sequence SSMLTQIERQFGIPTAIVG. A helical membrane pass occupies residues 60 to 80; it reads FINGSFEIGNLLLIIFVSYFG. Over 81 to 86 the chain is Cytoplasmic; the sequence is MKLHRP. A helical membrane pass occupies residues 87–111; the sequence is IVIGVGCAVMGLGCFIISLPHFLMG. At 112–155 the chain is on the extracellular side; sequence RYEYETTILPTSNLSSNSFLCMENQTQTLNPAQDPAECVKEVKS. 2 N-linked (GlcNAc...) asparagine glycosylation sites follow: asparagine 124 and asparagine 135. The helical transmembrane segment at 156–184 threads the bilayer; it reads LMWIYVLVGNIIRGIGETPIMPLGVSYIE. Over 185-203 the chain is Cytoplasmic; sequence NFAKSENSPLYIGILETGK. Residues 204–224 form a helical membrane-spanning segment; it reads MIGPIFGLLLGSFCASIYVDT. Topologically, residues 225–242 are extracellular; sequence GSVNTDDLTITPTDIRWV. Residues 243 to 267 traverse the membrane as a helical segment; the sequence is GAWWIGFLVCAGVNILISIPFFFFP. Over 268–311 the chain is Cytoplasmic; sequence KTLPKEGLQENVDGTENAKEESTEKRPRKKNRGITKDFFPFLKS. The interval 277-296 is disordered; sequence ENVDGTENAKEESTEKRPRK. The span at 283 to 292 shows a compositional bias: basic and acidic residues; sequence ENAKEESTEK. The chain crosses the membrane as a helical span at residues 312-333; sequence PVLQPDLHAVHPYKVLQVNAFN. The Extracellular portion of the chain corresponds to 334-353; it reads IYFSFLPKYLENQYGKSTAE. Residues 354 to 377 form a helical membrane-spanning segment; that stretch reads VIFLMGVYNLPAICIGYLIAGFMM. Topologically, residues 378–381 are cytoplasmic; that stretch reads KKFK. A helical membrane pass occupies residues 382–405; that stretch reads ITVKTAAFLAFCLSLSEYSFGFCN. Topologically, residues 406–513 are extracellular; the sequence is FLITCDNVPV…PECTNKLQYL (108 aa). A Kazal-like domain is found at 433-488; the sequence is NNVLADCNTRCSCLTKTWDPVCGDNGLAYMSACLAGCEKSVGTGTNMVFHNCSCIQ. Intrachain disulfides connect cysteine 439–cysteine 469, cysteine 445–cysteine 465, and cysteine 454–cysteine 486. Residues asparagine 483 and asparagine 492 are each glycosylated (N-linked (GlcNAc...) asparagine). Residues 514–536 traverse the membrane as a helical segment; sequence LILSGFLSILYSFAAIPGYMVFL. Topologically, residues 537–545 are cytoplasmic; that stretch reads RCIKSEEKS. The chain crosses the membrane as a helical span at residues 546–571; that stretch reads LGIGIHAFCIRVFAGIPAPIYFGALI. Topologically, residues 572–605 are extracellular; that stretch reads DRTCLHWGTQKCGAPGACRMYDINSFRRIYLGMS. Residues 606 to 623 form a helical membrane-spanning segment; it reads AALRGSSYLPAFVIVILT. The Cytoplasmic portion of the chain corresponds to 624–670; it reads RKFSLPGKINSSEMEIAEMKLTEKESQCTDVHRNPKFKNDGELKTKL.

Belongs to the organo anion transporter (TC 2.A.60) family. In terms of tissue distribution, all isoforms are detected in kidney, and many are kidney specific. Isoforms 2 and 13 are also detected in liver. Isoforms 4 and 9/K4 are ubiquitous, but isoform 9/K13 is kidney specific. Isoforms 5 and 14 are detected in all tissues tested, with the exception of pancreas and spleen. Isoforms 11 and 15 are detected in kidney, pancreas and testis. Isoform 7 is detected in kidney, liver, testis and spleen.

Its subcellular location is the cell membrane. Functionally, mediates the Na(+)-independent transport of organic anions such as methotrexate, taurocholate, folate and prostaglandin E2. May contribute to renal secretion and/or reabsorption of hydrophobic anionic compounds. Mediates renal clearance of methotrexate from the blood. This is Solute carrier organic anion transporter family member 1A3 (Slco1a3) from Rattus norvegicus (Rat).